The primary structure comprises 489 residues: Betaine aldehyde dehydrogenase (489 aa).

Residues Thr26 and Asp93 each coordinate K(+). 150–152 (GAW) serves as a coordination point for NAD(+). Lys162 functions as the Charge relay system in the catalytic mechanism. 176 to 179 (KPSE) serves as a coordination point for NAD(+). K(+) is bound at residue Val180. 229 to 232 (GVET) is a binding site for NAD(+). K(+) is bound at residue Leu245. The active-site Proton acceptor is the Glu251. NAD(+)-binding residues include Gly253, Cys285, and Glu386. The Nucleophile role is filled by Cys285. Cys285 carries the post-translational modification Cysteine sulfenic acid (-SOH). Residues Lys456 and Gly459 each coordinate K(+). The active-site Charge relay system is the Glu463.

It belongs to the aldehyde dehydrogenase family. As to quaternary structure, dimer of dimers. K(+) is required as a cofactor.

The enzyme catalyses betaine aldehyde + NAD(+) + H2O = glycine betaine + NADH + 2 H(+). Its pathway is amine and polyamine biosynthesis; betaine biosynthesis via choline pathway; betaine from betaine aldehyde: step 1/1. In terms of biological role, involved in the biosynthesis of the osmoprotectant glycine betaine. Catalyzes the irreversible oxidation of betaine aldehyde to the corresponding acid. This chain is Betaine aldehyde dehydrogenase, found in Burkholderia lata (strain ATCC 17760 / DSM 23089 / LMG 22485 / NCIMB 9086 / R18194 / 383).